The sequence spans 201 residues: Histone chaperone asf1a-A (201 aa).

The protein belongs to the ASF1 family. Interacts with histone H3 (including both histone H3.1 and H3.3) and histone H4. Interacts with hira and p60.

It localises to the nucleus. In terms of biological role, histone chaperone that facilitates histone deposition and histone exchange and removal during nucleosome assembly and disassembly. Not critical for histone deposition during nucleosome assembly. The polypeptide is Histone chaperone asf1a-A (asf1aa) (Xenopus laevis (African clawed frog)).